The following is a 365-amino-acid chain: Snurportin-1 (365 aa).

The 63-residue stretch at 10 to 72 folds into the IBB domain; sequence GGVALAAPNS…RLAEGDWAGV (63 aa). Disordered regions lie at residues 15–34 and 69–90; these read AAPN…KGRG and WAGV…EMEV. Residues 73–90 show a composition bias toward acidic residues; sequence ESDEDGGEDGDGEEEMEV. An interaction with m3G-cap structure region spans residues 129 to 131; it reads GKR. The interval 211 to 333 is necessary for binding to the m3G-cap structure; that stretch reads LSSKIQEEEG…GKAQPSAEAA (123 aa). The disordered stretch occupies residues 317–365; it reads RSKKLAAGKAQPSAEAAARNGHYELEHLSTPQPANSAQGQEEAGSQMEN. Polar residues predominate over residues 345 to 355; it reads STPQPANSAQG.

The protein belongs to the snurportin family.

The protein localises to the nucleus. It is found in the cytoplasm. Functionally, functions as an U snRNP-specific nuclear import adapter. Involved in the trimethylguanosine (m3G)-cap-dependent nuclear import of U snRNPs. Binds specifically to the terminal m3G-cap U snRNAs. The sequence is that of Snurportin-1 (SNUPN) from Gallus gallus (Chicken).